Here is a 439-residue protein sequence, read N- to C-terminus: Cytochrome b-c1 complex reductase subunit, mitochondrial (439 aa).

Residues 1 to 17 (MIRGSSALKSLTSRRLY) constitute a mitochondrion transit peptide.

It belongs to the peptidase M16 family. UQCRC1/QCR1 subfamily. Component of the ubiquinol-cytochrome c oxidoreductase (cytochrome b-c1 complex, complex III, CIII), a multisubunit enzyme composed of 10 subunits. The complex is composed of 3 respiratory subunits cytochrome b (COB), cytochrome c1 (CYT1) and Rieske protein (RIP1), 2 core protein subunits COR1 and QCR2, and 5 low-molecular weight protein subunits QCR6, QCR7, QCR8, QCR9 and QCR10. The complex exists as an obligatory dimer and forms supercomplexes (SCs) in the inner mitochondrial membrane with a monomer or a dimer of cytochrome c oxidase (complex IV, CIV), resulting in 2 different assemblies (supercomplexes III(2)IV and III(2)IV(2)).

The protein resides in the mitochondrion inner membrane. Functionally, component of the ubiquinol-cytochrome c oxidoreductase, a multisubunit transmembrane complex that is part of the mitochondrial electron transport chain which drives oxidative phosphorylation. The complex plays an important role in the uptake of multiple carbon sources present in different host niches. The protein is Cytochrome b-c1 complex reductase subunit, mitochondrial of Candida albicans (strain SC5314 / ATCC MYA-2876) (Yeast).